Here is a 107-residue protein sequence, read N- to C-terminus: MLQKIADQRSYLTAAHNTLTALEKKLDNDYGEIEHNNNVIEYTVDGVGRYVVSRQPSVMELWVSSPITGPSKFGMVEKKFVEKKNGMEIMKYFEMEMERIKRMLGNR.

Belongs to the frataxin family. As to quaternary structure, monomer.

The protein resides in the cytoplasm. Its function is as follows. Promotes the assembly and repair of iron-sulfur clusters by delivering Fe(2+) to proteins involved in these pathways. This is Frataxin (YFH1) from Trachipleistophora hominis (Microsporidian parasite).